Here is a 393-residue protein sequence, read N- to C-terminus: MNIPATGKDFMIVNMGPHHPSMHGVLRLIVTLDGEDVIDCEPILGYLHRGMEKIAENRTIIQYLPYVTRWDYLATMFTEAITVNGPEQLGNIQVPKRASYIRVIMLELSRIASHLLWLGPFMADIGAQTPFFYIFRERELVYDLFEAATGMRMMHNYFRIGGIAADLPHGWIDKCLDFCDYFLTGVAEYQKLITRNPIFLERVEGVGIIGGEEAINWGLSGPMLRASGIEWDLRKVDHYECYDEFDWEVQWQKEGDSLARYLVRISEMTESIKIIQQALEGIPGGPYENLEIRCFDRKKDPEWNDFDYRFISKKPSPTFELPKQELYVRVEAPKGELGIFLIGDQSGFPWRWKIRPPGFINLQILPQLVKRMKLADIMTILGSIDIIMGEVDR.

Belongs to the complex I 49 kDa subunit family. As to quaternary structure, NDH is composed of at least 16 different subunits, 5 of which are encoded in the nucleus.

It localises to the plastid. The protein resides in the chloroplast thylakoid membrane. It carries out the reaction a plastoquinone + NADH + (n+1) H(+)(in) = a plastoquinol + NAD(+) + n H(+)(out). The catalysed reaction is a plastoquinone + NADPH + (n+1) H(+)(in) = a plastoquinol + NADP(+) + n H(+)(out). Its function is as follows. NDH shuttles electrons from NAD(P)H:plastoquinone, via FMN and iron-sulfur (Fe-S) centers, to quinones in the photosynthetic chain and possibly in a chloroplast respiratory chain. The immediate electron acceptor for the enzyme in this species is believed to be plastoquinone. Couples the redox reaction to proton translocation, and thus conserves the redox energy in a proton gradient. The protein is NAD(P)H-quinone oxidoreductase subunit H, chloroplastic of Carica papaya (Papaya).